Reading from the N-terminus, the 396-residue chain is Aldo-keto reductase ausK (396 aa).

NADP(+) is bound at residue Asp76. The Proton donor role is filled by Tyr81. His156 is a binding site for substrate. NADP(+) is bound by residues 186 to 187 (CN), Gln212, 241 to 251 (DALGSGKFQSR), and 317 to 325 (RKIQHLHDN).

Belongs to the aldo/keto reductase family. Aldo/keto reductase 2 subfamily. In terms of assembly, homodimer.

The protein operates within secondary metabolite biosynthesis; terpenoid biosynthesis. Its function is as follows. Aldo-keto reductase; part of the gene cluster that mediates the biosynthesis of calidodehydroaustin, a fungal meroterpenoid. The first step of the pathway is the synthesis of 3,5-dimethylorsellinic acid by the polyketide synthase ausA. 3,5-dimethylorsellinic acid is then prenylated by the polyprenyl transferase ausN. Further epoxidation by the FAD-dependent monooxygenase ausM and cyclization by the probable terpene cyclase ausL lead to the formation of protoaustinoid A. Protoaustinoid A is then oxidized to spiro-lactone preaustinoid A3 by the combined action of the FAD-binding monooxygenases ausB and ausC, and the dioxygenase ausE. Acid-catalyzed keto-rearrangement and ring contraction of the tetraketide portion of preaustinoid A3 by ausJ lead to the formation of preaustinoid A4. The aldo-keto reductase ausK, with the help of ausH, is involved in the next step by transforming preaustinoid A4 into isoaustinone which is in turn hydroxylated by the P450 monooxygenase ausI to form austinolide. The cytochrome P450 monooxygenase ausG modifies austinolide to austinol. Austinol is further acetylated to austin by the O-acetyltransferase ausP, which spontaneously changes to dehydroaustin. The cytochrome P450 monooxygenase ausR then converts dehydroaustin is into 7-dehydrodehydroaustin. The hydroxylation catalyzed by ausR permits the O-acetyltransferase ausQ to add an additional acetyl group to the molecule, leading to the formation of acetoxydehydroaustin. The short chain dehydrogenase ausT catalyzes the reduction of the double bond present between carbon atoms 1 and 2 to convert 7-dehydrodehydroaustin into 1,2-dihydro-7-hydroxydehydroaustin. AusQ catalyzes not only an acetylation reaction but also the addition of the PKS ausV diketide product to 1,2-dihydro-7-hydroxydehydroaustin, forming precalidodehydroaustin. Finally, the iron/alpha-ketoglutarate-dependent dioxygenase converts precalidodehydroaustin into calidodehydroaustin. This is Aldo-keto reductase ausK from Aspergillus calidoustus.